A 402-amino-acid chain; its full sequence is Putative cytochrome P450 133B1 (402 aa).

Cys348 contacts heme.

It belongs to the cytochrome P450 family. It depends on heme as a cofactor.

The chain is Putative cytochrome P450 133B1 (cyp133B1) from Xylella fastidiosa (strain 9a5c).